Here is a 392-residue protein sequence, read N- to C-terminus: Sex-determining region Y protein (392 aa).

Positions 4 to 81 (HVKRPMNAFM…YKYQPHRRAK (78 aa)) are sufficient for interaction with KPNB1. Residues 5 to 73 (VKRPMNAFMV…LHREKYPNYK (69 aa)) constitute a DNA-binding region (HMG box). Required for nuclear localization stretches follow at residues 6–22 (KRPMNAFMVWSRGERHK) and 75–81 (QPHRRAK). Residues 52 to 84 (RPFFQEAQRLKILHREKYPNYKYQPHRRAKVSQ) form a sufficient for interaction with EP300 region. Lys81 is modified (N6-acetyllysine). Positions 92–144 (AVASTKLYNLLQWDRNPHAITYRQDWSRAAHLYSKNQQSFYWQPVDIPTGHLQ) are necessary for interaction with ZNF208 isoform KRAB-O. The segment at 94 to 138 (ASTKLYNLLQWDRNPHAITYRQDWSRAAHLYSKNQQSFYWQPVDI) is necessary for interaction with SLC9A3R2 and nuclear accumulation of SLC9A3R2. The tract at residues 142–361 (HLQQQQQQQQ…QQQQQQQQQQ (220 aa)) is disordered. The span at 144–181 (QQQQQQQQQQQFHNHHQQQQQFYDHHQQQQQQQQQQQQ) shows a compositional bias: low complexity. 2 stretches are compositionally biased toward basic and acidic residues: residues 182-197 (FHDHHQQKQQFHDHHQ) and 210-228 (QEQQFHDHHQQQQQFHDHQ). Over residues 229 to 238 (QQQQQQQQQQ) the composition is skewed to low complexity. Basic and acidic residues-rich tracts occupy residues 239 to 250 (FHDHHQQKQQFH), 261 to 295 (FHDHQQQQQQFHDHQQQQHQFHDHPQQKQQFHDHP), and 313 to 349 (QFHDHHQQKQQFHDHHQQKQQFHDHHQQQQQFHDHHQ). Positions 350–361 (QQQQQQQQQQQQ) are enriched in low complexity.

It belongs to the SRY family. In terms of assembly, interacts with KPNB1, ZNF208 isoform KRAB-O, PARP1 and SLC9A3R2. The interaction with KPNB1 is sensitive to dissociation by Ran in the GTP-bound form. Interaction with PARP1 impaired its DNA-binding activity. Interacts with CALM, EP300, HDAC3 and WT1. The interaction with EP300 modulates its DNA-binding activity. Degraded due to the presence of a degron at the C-terminus that promotes its degradation. In terms of processing, phosphorylated on serine residues by PKA. Phosphorylation by PKA enhances its DNA-binding activity and stimulates transcription repression. Post-translationally, acetylation of Lys-81 contributes to its nuclear localization and enhances its interaction with KPNB1. Poly-ADP-ribosylated by PARP1. ADP-ribosylation reduces its DNA-binding activity. In terms of tissue distribution, expressed in gonadal somatic pre-Sertoli cells. Expressed in the substantia nigra of the brain (at protein level). Expressed in diencephalon, cortex, the substantia nigra of the midbrain and the medial mammillary bodies of the hypothalamus of male, but not female. Expressed in gonadal somatic pre-Sertoli cells. While it is expressed at lower level compared to isoform Sry-S, this form is more stable and constitutes the predominant protein product of the Sry locus in XY gonads (at protein level).

The protein localises to the nucleus speckle. It is found in the cytoplasm. It localises to the nucleus. Functionally, transcriptional regulator that controls a genetic switch in male development. It is necessary and sufficient for initiating male sex determination by directing the development of supporting cell precursors (pre-Sertoli cells) as Sertoli rather than granulosa cells. Involved in different aspects of gene regulation including promoter activation or repression. Binds to the DNA consensus sequence 5'-[AT]AACAA[AT]-3'. SRY HMG box recognizes DNA by partial intercalation in the minor groove and promotes DNA bending. Also involved in pre-mRNA splicing. In male adult brain involved in the maintenance of motor functions of dopaminergic neurons. In terms of biological role, constitutes the major isoform, which is necessary and sufficient for initiating male sex determination. Constitutes a minor isoform, which is unstable due to the presence of a degron at the C-terminus that promotes its degradation. Not necessary and sufficient for initiating male sex determination. In Mus musculus (Mouse), this protein is Sex-determining region Y protein.